The following is a 425-amino-acid chain: tRNA(Ile)-lysidine synthase (425 aa).

27–32 provides a ligand contact to ATP; it reads SGGLDS.

The protein belongs to the tRNA(Ile)-lysidine synthase family.

It localises to the cytoplasm. The enzyme catalyses cytidine(34) in tRNA(Ile2) + L-lysine + ATP = lysidine(34) in tRNA(Ile2) + AMP + diphosphate + H(+). Functionally, ligates lysine onto the cytidine present at position 34 of the AUA codon-specific tRNA(Ile) that contains the anticodon CAU, in an ATP-dependent manner. Cytidine is converted to lysidine, thus changing the amino acid specificity of the tRNA from methionine to isoleucine. In Streptococcus pneumoniae (strain JJA), this protein is tRNA(Ile)-lysidine synthase.